Here is a 139-residue protein sequence, read N- to C-terminus: Acid shock protein (139 aa).

The signal sequence occupies residues 1-21 (MKKVLALVVAAAMGLSSAAFA). Positions 22–80 (ADAVSTTQAPAATHSTAAKTTHHKKHHKAAAKPAAEQKAQAAKKHKKAEAKPAAAQKAQ) are excised as a propeptide. The span at 27–40 (TTQAPAATHSTAAK) shows a compositional bias: low complexity. Positions 27-139 (TTQAPAATHS…AAKPTAQPAA (113 aa)) are disordered. Over residues 41-51 (TTHHKKHHKAA) the composition is skewed to basic residues. Low complexity-rich tracts occupy residues 52–61 (AKPAAEQKAQ) and 90–99 (AKPAAPQKAQ). The segment covering 118-130 (AAKKHHKTTKHQA) has biased composition (basic residues).

It belongs to the Asr family. In terms of processing, proteolytic processing gives rise to the active protein.

Its subcellular location is the periplasm. Its function is as follows. Required for growth and/or survival at acidic conditions. The protein is Acid shock protein (asr) of Klebsiella pneumoniae.